Reading from the N-terminus, the 86-residue chain is Large ribosomal subunit protein bL31 (86 aa).

The segment at 66–86 is disordered; it reads GMGSANSATSKEQKADKDSQK. A compositionally biased stretch (basic and acidic residues) spans 76–86; sequence KEQKADKDSQK.

The protein belongs to the bacterial ribosomal protein bL31 family. Type A subfamily. In terms of assembly, part of the 50S ribosomal subunit.

Binds the 23S rRNA. The sequence is that of Large ribosomal subunit protein bL31 from Prochlorococcus marinus (strain MIT 9215).